The chain runs to 202 residues: MRTLDKRIAPNVKLAASLVARAPTLTLAYDARCKSRLAATLDTGEDVAVVLPRGTVLRDGDVLVADDGALVRIAAAPETVLLVRAGDPLTLMRAAYHLGNRHTPVEIGDGYLKLEADPVLADMLRRLGTQVEPTSAPFQPEAGAYGGGHKHGHDATFAEDYALAQQVFGEHHGHSHSHDHDHDHDHQHGPGCTHGHRGHDHH.

Residues His171–His188 are compositionally biased toward basic and acidic residues. Positions His171–His202 are disordered.

Belongs to the UreE family.

It localises to the cytoplasm. Involved in urease metallocenter assembly. Binds nickel. Probably functions as a nickel donor during metallocenter assembly. The chain is Urease accessory protein UreE from Burkholderia ambifaria (strain ATCC BAA-244 / DSM 16087 / CCUG 44356 / LMG 19182 / AMMD) (Burkholderia cepacia (strain AMMD)).